The primary structure comprises 73 residues: Translation initiation factor IF-1 (73 aa).

Positions 1 to 73 (MAKKDGAIEV…SRGRIVYRYK (73 aa)) constitute an S1-like domain.

Belongs to the IF-1 family. In terms of assembly, component of the 30S ribosomal translation pre-initiation complex which assembles on the 30S ribosome in the order IF-2 and IF-3, IF-1 and N-formylmethionyl-tRNA(fMet); mRNA recruitment can occur at any time during PIC assembly.

Its subcellular location is the cytoplasm. Its function is as follows. One of the essential components for the initiation of protein synthesis. Stabilizes the binding of IF-2 and IF-3 on the 30S subunit to which N-formylmethionyl-tRNA(fMet) subsequently binds. Helps modulate mRNA selection, yielding the 30S pre-initiation complex (PIC). Upon addition of the 50S ribosomal subunit IF-1, IF-2 and IF-3 are released leaving the mature 70S translation initiation complex. The sequence is that of Translation initiation factor IF-1 from Mycobacterium avium (strain 104).